A 20-amino-acid polypeptide reads, in one-letter code: Basic phospholipase A2 cannitoxin alpha chain (20 aa).

In terms of assembly, heterotrimer of alpha, beta, and gamma chains; non-covalently linked. It depends on Ca(2+) as a cofactor. In terms of tissue distribution, expressed by the venom gland.

Its subcellular location is the secreted. The enzyme catalyses a 1,2-diacyl-sn-glycero-3-phosphocholine + H2O = a 1-acyl-sn-glycero-3-phosphocholine + a fatty acid + H(+). Heterotrimer: Snake venom phospholipase A2 (PLA2) heterotrimer that acts as a potent presynaptic neurotoxin by blocking synaptic transmission and synaptic vesicle recycling. Enzymatic activity is essential for the neurotoxic effects. May act by binding in a calcium-dependent fashion to neurotonal pentraxin-1 (NPTX1) and neurotonal pentraxin-2 (NPTX2), but not to neuronal pentraxin receptor (NPTXR). Also binds to taipoxin-associated calcium binding protein 49 (RCN2), a protein localized in the lumen of endoplasmic reticulum. Its function is as follows. Monomer (alpha chain): Snake venom phospholipase A2 (PLA2) that possesses a low level of presynaptic activity and the same high enzymatic activity than the heterotrimer. PLA2 catalyzes the calcium-dependent hydrolysis of the 2-acyl groups in 3-sn-phosphoglycerides. The polypeptide is Basic phospholipase A2 cannitoxin alpha chain (Oxyuranus scutellatus canni (Papuan taipan)).